A 1583-amino-acid chain; its full sequence is Dynamin-binding protein (1583 aa).

Residue Met-1 is modified to N-acetylmethionine. 4 consecutive SH3 domains span residues Glu-2–Ile-61, Glu-66–Leu-126, Tyr-145–Pro-204, and Gln-243–Lys-302. Disordered regions lie at residues His-217–Pro-244, Glu-306–Glu-329, and Glu-366–Tyr-464. Residues Gly-224–Gln-243 show a composition bias toward acidic residues. The span at Glu-366–Thr-379 shows a compositional bias: basic and acidic residues. The segment covering Glu-406 to Tyr-442 has biased composition (polar residues). The residue at position 495 (Ser-495) is a Phosphoserine. Disordered stretches follow at residues Arg-594–Gln-656 and Leu-671–Asp-693. The segment covering Pro-637–Pro-653 has biased composition (pro residues). The span at Glu-675–Pro-685 shows a compositional bias: basic and acidic residues. Positions Leu-742–Met-762 form a coiled coil. The DH domain maps to Lys-791–Tyr-974. A BAR domain is found at Leu-1015 to Leu-1224. In terms of domain architecture, SH3 5 spans Pro-1292 to Thr-1355. The disordered stretch occupies residues Arg-1357–Thr-1496. Residues Asp-1361–Ser-1387 show a composition bias toward low complexity. Positions Gly-1388–Thr-1414 are enriched in polar residues. Low complexity predominate over residues Ser-1433–Pro-1456. An SH3 6 domain is found at Glu-1519 to Tyr-1582.

Binds DNM1 via its N-terminal SH3 domains. The C-terminal SH3 domain binds a complex containing actin, tubulin, Hsp70 and actin-regulatory proteins, such as ENAH, EVL, WIRE, CR16, WAVE1 and NAP1L1. Interacts with FASLG. Interacts (via SH3 domain 6) with WASL. Interacts (via SH3 domain 6) interacts with ENAH. Interacts (via C-terminal domain) with TJP1; required for the apical cell-cell junction localization of DNMBP.

The protein localises to the cytoplasm. The protein resides in the golgi apparatus. Its subcellular location is the golgi stack. It is found in the cytoskeleton. It localises to the synapse. The protein localises to the cell junction. Its function is as follows. Plays a critical role as a guanine nucleotide exchange factor (GEF) for CDC42 in several intracellular processes associated with the actin and microtubule cytoskeleton. Regulates the structure of apical junctions in epithelial cells. Participates in the normal lumenogenesis of epithelial cell cysts by regulating spindle orientation. Plays a key role in ciliogenesis and cyst formation. May play a role in membrane trafficking between the cell surface and the Golgi. This Canis lupus familiaris (Dog) protein is Dynamin-binding protein.